A 1038-amino-acid polypeptide reads, in one-letter code: Zinc finger protein 628 (1038 aa).

Residues 1–31 form a disordered region; the sequence is MAGSHVDMAPASTTEGTGEKPGPTAPAPTPA. Residues 13-22 are compositionally biased toward low complexity; sequence TTEGTGEKPG. 6 C2H2-type zinc fingers span residues 34-56, 62-84, 90-112, 118-140, 146-168, and 174-196; these read YECGECGKSFRWSSRLLHHQRTH, YKCPDCPKAFKGSSALLYHQRGH, YQCPDCPKAFKRSSLLQIHRSVH, FTCGQCGLAFKWSSHYQYHLRQH, YPCPDCPKAFKNSSSLRRHRHVH, and YTCGICGKSFTQSTNLRQHQRVH. Thr-197 is modified (phosphothreonine). The C2H2-type 7 zinc-finger motif lies at 202-224; that stretch reads FRCPLCPKTFTHSSNLLLHHRTH. Disordered regions lie at residues 220-242 and 254-273; these read HHRTHGPAPGPAPAPAPPGETSR and LQPRSPPEPPAPPPQPPPVV. Composition is skewed to pro residues over residues 227 to 237 and 257 to 273; these read APGPAPAPAPP and RSPPEPPAPPPQPPPVV. C2H2-type zinc fingers lie at residues 346–368, 376–398, 446–468, 474–496, 502–524, 530–552, and 558–580; these read FACLPCGKSFRTVAGLSRHQHSH, FRCGSCDGAFPQLASLLAHQQCH, YKCAECGKAFKGSSGLRYHLRDH, YQCGECGKAFKRSSLLAIHQRVH, FTCGQCGLTFKWSSHYQYHLRLH, YACTECGKAFRNTSCLRRHRHVH, and HSCSVCGKSFAQTSNLRQHQRVH. Thr-581 is modified (phosphothreonine). C2H2-type zinc fingers lie at residues 586-608 and 614-636; these read FRCPLCPKTFTHSSNLLLHQRTH and FACPICGRGFVMAAYLQRHLRTH. Disordered regions lie at residues 637-661 and 717-763; these read TPATTTSGTTGSAVASQPPAPLAAA and PSSV…AGQG. A compositionally biased stretch (pro residues) spans 723-733; that stretch reads PTPPPPPPPPK. Residues 734–756 show a composition bias toward low complexity; sequence VILLPPASAGGPGSGAARPGPRS. Tandem repeats lie at residues 811 to 821, 822 to 832, 833 to 843, and 844 to 854. Positions 811–854 are 4 X 11 AA tandem repeats of VQLQP-[AL]-[QT]-[EG]-[VQ]-[ATV]-[ST]; the sequence is VQLQPAQEVATVQLQPAQEVTTVQLQPAQEVTTVQLQPLTGQVS. The interaction with TAF4B stretch occupies residues 922-1038; the sequence is DGEQTRLCVQ…LPAVQLVHTF (117 aa).

Interacts with TAF4B. In terms of tissue distribution, expressed widely in testis, in both germline and somatic cells. Seems to have particularly strong expression in meiotic spermatocytes, postmeiotic round spermatids and Sertoli cells. Not detected in elongating spermatids or mature sperm (at protein level). Expressed in testis, ovary, spleen, lung, brain, liver and kidney. Expressed in D3 embryonic stem cells and F9 embryonal carcinoma cells.

Its subcellular location is the nucleus. Functionally, transcriptional activator. Binds DNA on GT-box consensus sequence 5'-TTGGTT-3'. Plays a role in spermiogenesis. The polypeptide is Zinc finger protein 628 (Mus musculus (Mouse)).